The chain runs to 289 residues: Diacylglycerol pyrophosphate phosphatase 1 (289 aa).

Over 1 to 21 the chain is Vacuolar; the sequence is MNRVSFIKTPFNIGAKWRLED. A helical membrane pass occupies residues 22–42; it reads VFLLIIMILLNYPVYYQQPFE. Over 43-65 the chain is Cytoplasmic; sequence RQFYINDLTISHPYATTERVNNN. The chain crosses the membrane as a helical span at residues 66–86; the sequence is MLFVYSFVVPSLTILIIGSIL. Topologically, residues 87–92 are vacuolar; the sequence is ADRRHL. The helical transmembrane segment at 93–113 threads the bilayer; sequence IFILYTSLLGLSLAWFSTSFF. The Cytoplasmic portion of the chain corresponds to 114–172; the sequence is TNFIKNWIGRLRPDFLDRCQPVEGLPLDTLFTAKDVCTTKNHERLLDGFRTTPSGHSSE. Positions 118-126 are phosphatase sequence motif I; sequence KNWIGRLRP. The tract at residues 166–169 is phosphatase sequence motif II; the sequence is PSGH. A run of 2 helical transmembrane segments spans residues 173–193 and 194–214; these read SFAGLGYLYFWLCGQLLTESP and LMPLWRKMVAFLPLLGAALIA. Over 215-222 the chain is Cytoplasmic; sequence LSRTQDYR. A phosphatase sequence motif III region spans residues 216–227; the sequence is SRTQDYRHHFVD. The chain crosses the membrane as a helical span at residues 223–243; that stretch reads HHFVDVILGSMLGYIMAHFFY. Residues 244 to 289 are Vacuolar-facing; it reads RRIFPPIDDPLPFKPLMDDSDVTLEEAVTHQRIPDEELHPLSDEGM. Ser285 is subject to Phosphoserine.

It belongs to the PA-phosphatase related phosphoesterase family.

It is found in the vacuole membrane. The catalysed reaction is a 1,2-diacyl-sn-glycerol 3-diphosphate + H2O = a 1,2-diacyl-sn-glycero-3-phosphate + phosphate + H(+). It carries out the reaction a 1,2-diacyl-sn-glycero-3-phosphate + H2O = a 1,2-diacyl-sn-glycerol + phosphate. The enzyme catalyses a 1-acyl-sn-glycero-3-phosphate + H2O = a 1-acyl-sn-glycerol + phosphate. With respect to regulation, inhibited by sodium fluoride (NaF) and pyrophosphate. Strongly inhibited by manganese ion and, to a lower extent, by magnesium and calcium ions. Also inhibited by Cu(2+) ion. In an indirect manner, it is also inhibited by the zinc ion which is able to form a complex with DGPP and prevent the enzyme from removing the phosphate from the substrate. Not inhibited by N-ethylmaleimide. In terms of biological role, catalyzes the dephosphorylation of diacylglycerol diphosphate (DGPP) to phosphatidate (PA) and the subsequent dephosphorylation of PA to diacylglycerol (DAG). Together with LPP1, regulates intracellular DGPP and PA levels, which are phospholipid molecules believed to play a signaling role in stress response. Can also use lysophosphatidic acid (LPA) and phosphatidylglycerophosphate as substrates. Substrate preference is DGPP &gt; LPA &gt; PA. Activity is independent of a divalent cation ion and insensitive to inhibition by N-ethylmaleimide. This chain is Diacylglycerol pyrophosphate phosphatase 1 (DPP1), found in Saccharomyces cerevisiae (strain ATCC 204508 / S288c) (Baker's yeast).